The primary structure comprises 572 residues: Arginine--tRNA ligase (572 aa).

The short motif at 122–132 (PNLAKEMHVGH) is the 'HIGH' region element.

This sequence belongs to the class-I aminoacyl-tRNA synthetase family. In terms of assembly, monomer.

The protein resides in the cytoplasm. The catalysed reaction is tRNA(Arg) + L-arginine + ATP = L-arginyl-tRNA(Arg) + AMP + diphosphate. This chain is Arginine--tRNA ligase, found in Neisseria meningitidis serogroup C / serotype 2a (strain ATCC 700532 / DSM 15464 / FAM18).